The primary structure comprises 133 residues: Large ribosomal subunit protein bL20 (133 aa).

This sequence belongs to the bacterial ribosomal protein bL20 family.

Functionally, binds directly to 23S ribosomal RNA and is necessary for the in vitro assembly process of the 50S ribosomal subunit. It is not involved in the protein synthesizing functions of that subunit. The protein is Large ribosomal subunit protein bL20 of Rubrobacter xylanophilus (strain DSM 9941 / JCM 11954 / NBRC 16129 / PRD-1).